Here is a 68-residue protein sequence, read N- to C-terminus: UPF0253 protein ASA_2184 (68 aa).

The protein belongs to the UPF0253 family.

This is UPF0253 protein ASA_2184 from Aeromonas salmonicida (strain A449).